The sequence spans 588 residues: Transmembrane protein 201 homolog (588 aa).

Topologically, residues 1-212 are nuclear; sequence MEVAAAVGVI…FFFAGGSTCE (212 aa). The chain crosses the membrane as a helical span at residues 213-233; sequence ALHFGCLISSIILFLANIDFL. Over 234–254 the chain is Perinuclear space; the sequence is QQDAGASLINLPKALQDILPE. A helical membrane pass occupies residues 255 to 275; it reads VYKYSFVINFLIFTTHLIAAF. Residues 276–280 lie on the Nuclear side of the membrane; the sequence is NNKCR. The helical transmembrane segment at 281 to 301 threads the bilayer; sequence VTLPDLLLPILLILAMLTVLT. The Perinuclear space segment spans residues 302-309; sequence SSDNLSQD. The chain crosses the membrane as a helical span at residues 310 to 330; that stretch reads VALVRGACASFSTILSMAVTL. Residues 331–564 are Nuclear-facing; the sequence is LPRKKLHKKR…SGAWQCRVIG (234 aa). The disordered stretch occupies residues 378–457; that stretch reads RRSPHTPSAS…QSTRSSHFKP (80 aa). Residues 384 to 396 show a composition bias toward low complexity; the sequence is PSASPPAMNSSPP. Composition is skewed to polar residues over residues 418–430 and 441–452; these read NMQS…NNHV and MAAQSVAQSTRS. The chain crosses the membrane as a helical span at residues 565 to 585; the sequence is ILFALVFIVLIMQIGLFYVLF. Over 586–588 the chain is Perinuclear space; the sequence is TRN.

Belongs to the TMEM201 family.

It localises to the nucleus inner membrane. Functionally, plays a role in nuclear migration in hypodermal cells. The chain is Transmembrane protein 201 homolog from Caenorhabditis elegans.